We begin with the raw amino-acid sequence, 605 residues long: UvrABC system protein C (605 aa).

The region spanning 15–92 (GLPGCYLMKN…IQKHQPYFNI (78 aa)) is the GIY-YIG domain. One can recognise a UVR domain in the interval 197-232 (GHAKKDLTQRMEKAAADMAYERAGDLRDQIRYIEAT).

Belongs to the UvrC family. As to quaternary structure, interacts with UvrB in an incision complex.

The protein resides in the cytoplasm. Functionally, the UvrABC repair system catalyzes the recognition and processing of DNA lesions. UvrC both incises the 5' and 3' sides of the lesion. The N-terminal half is responsible for the 3' incision and the C-terminal half is responsible for the 5' incision. The polypeptide is UvrABC system protein C (Levilactobacillus brevis (strain ATCC 367 / BCRC 12310 / CIP 105137 / JCM 1170 / LMG 11437 / NCIMB 947 / NCTC 947) (Lactobacillus brevis)).